A 172-amino-acid chain; its full sequence is uncharacterized protein (172 aa).

Positions 1–17 are enriched in basic and acidic residues; the sequence is MISLDKDENEIEHHNEE. Residues 1-27 form a disordered region; that stretch reads MISLDKDENEIEHHNEENSLVEQETAP. Residues 129-151 traverse the membrane as a helical segment; the sequence is IVTVLIGIIVAIFVLVVIGIAAF.

It localises to the membrane. This is an uncharacterized protein from Bacillus subtilis (strain 168).